We begin with the raw amino-acid sequence, 289 residues long: 4-hydroxy-3-methylbut-2-enyl diphosphate reductase (289 aa).

Cysteine 12 is a binding site for [4Fe-4S] cluster. (2E)-4-hydroxy-3-methylbut-2-enyl diphosphate is bound by residues histidine 44 and histidine 81. Histidine 44 and histidine 81 together coordinate dimethylallyl diphosphate. 2 residues coordinate isopentenyl diphosphate: histidine 44 and histidine 81. A [4Fe-4S] cluster-binding site is contributed by cysteine 103. Histidine 130 provides a ligand contact to (2E)-4-hydroxy-3-methylbut-2-enyl diphosphate. Residue histidine 130 participates in dimethylallyl diphosphate binding. Histidine 130 lines the isopentenyl diphosphate pocket. Glutamate 132 functions as the Proton donor in the catalytic mechanism. A (2E)-4-hydroxy-3-methylbut-2-enyl diphosphate-binding site is contributed by threonine 174. A [4Fe-4S] cluster-binding site is contributed by cysteine 202. Positions 230, 232, and 273 each coordinate (2E)-4-hydroxy-3-methylbut-2-enyl diphosphate. Positions 230, 232, and 273 each coordinate dimethylallyl diphosphate. Residues serine 230, asparagine 232, and serine 273 each coordinate isopentenyl diphosphate.

This sequence belongs to the IspH family. The cofactor is [4Fe-4S] cluster.

The catalysed reaction is isopentenyl diphosphate + 2 oxidized [2Fe-2S]-[ferredoxin] + H2O = (2E)-4-hydroxy-3-methylbut-2-enyl diphosphate + 2 reduced [2Fe-2S]-[ferredoxin] + 2 H(+). The enzyme catalyses dimethylallyl diphosphate + 2 oxidized [2Fe-2S]-[ferredoxin] + H2O = (2E)-4-hydroxy-3-methylbut-2-enyl diphosphate + 2 reduced [2Fe-2S]-[ferredoxin] + 2 H(+). The protein operates within isoprenoid biosynthesis; dimethylallyl diphosphate biosynthesis; dimethylallyl diphosphate from (2E)-4-hydroxy-3-methylbutenyl diphosphate: step 1/1. It participates in isoprenoid biosynthesis; isopentenyl diphosphate biosynthesis via DXP pathway; isopentenyl diphosphate from 1-deoxy-D-xylulose 5-phosphate: step 6/6. Catalyzes the conversion of 1-hydroxy-2-methyl-2-(E)-butenyl 4-diphosphate (HMBPP) into a mixture of isopentenyl diphosphate (IPP) and dimethylallyl diphosphate (DMAPP). Acts in the terminal step of the DOXP/MEP pathway for isoprenoid precursor biosynthesis. In Treponema denticola (strain ATCC 35405 / DSM 14222 / CIP 103919 / JCM 8153 / KCTC 15104), this protein is 4-hydroxy-3-methylbut-2-enyl diphosphate reductase.